We begin with the raw amino-acid sequence, 188 residues long: dCTP deaminase (188 aa).

Residues 111-116 (KSTYAR), 135-137 (TLE), Gln-156, Tyr-170, and Gln-180 contribute to the dCTP site. The active-site Proton donor/acceptor is Glu-137.

Belongs to the dCTP deaminase family. In terms of assembly, homotrimer.

The enzyme catalyses dCTP + H2O + H(+) = dUTP + NH4(+). The protein operates within pyrimidine metabolism; dUMP biosynthesis; dUMP from dCTP (dUTP route): step 1/2. Catalyzes the deamination of dCTP to dUTP. The chain is dCTP deaminase from Pseudomonas fluorescens (strain Pf0-1).